A 213-amino-acid chain; its full sequence is Uridine kinase (213 aa).

15–22 serves as a coordination point for ATP; that stretch reads GASASGKS.

The protein belongs to the uridine kinase family.

The protein localises to the cytoplasm. The enzyme catalyses uridine + ATP = UMP + ADP + H(+). It carries out the reaction cytidine + ATP = CMP + ADP + H(+). It participates in pyrimidine metabolism; CTP biosynthesis via salvage pathway; CTP from cytidine: step 1/3. The protein operates within pyrimidine metabolism; UMP biosynthesis via salvage pathway; UMP from uridine: step 1/1. The sequence is that of Uridine kinase from Salmonella newport (strain SL254).